Here is a 625-residue protein sequence, read N- to C-terminus: Glyco-Gag protein (625 aa).

Topologically, residues 1 to 66 (LGDVSEASGA…SVFRRNRAAR (66 aa)) are cytoplasmic. Residues 67 to 86 (LVCLSIVLSFVCSLLFWTAS) traverse the membrane as a helical segment. The Extracellular portion of the chain corresponds to 87-625 (KNMGQTVTTP…PQTSLLTLDD (539 aa)). The N-linked (GlcNAc...) asparagine; by host glycan is linked to asparagine 113. Positions 195–305 (PSPTAPILPS…STTSRAFPLR (111 aa)) are disordered. Asparagine 479 carries an N-linked (GlcNAc...) asparagine; by host glycan. Composition is skewed to basic and acidic residues over residues 522-553 (ETPE…EKER) and 573-606 (RQDR…DCPK). The disordered stretch occupies residues 522–625 (ETPEEREERV…PQTSLLTLDD (104 aa)).

Post-translationally, glycosylated by host. In terms of processing, cleaved by host near the middle of the molecule, releasing the c-terminal half containing capsid and nucleoprotein domains op GAG.

The protein resides in the host cell membrane. Plays a role in viral particle release. Presumably acts by facilitating the fission of the virion bud at the cell surface. May prevent the antiviral activity of murine APOBEC3. This is Glyco-Gag protein from AKV murine leukemia virus (AKR (endogenous) murine leukemia virus).